The primary structure comprises 426 residues: Cytochrome c biogenesis protein Ccs1 (426 aa).

3 consecutive transmembrane segments (helical) span residues L11–I31, N70–F90, and I153–S173.

It belongs to the Ccs1/CcsB family. As to quaternary structure, may interact with CcsA.

The protein localises to the plastid. The protein resides in the chloroplast thylakoid membrane. Required during biogenesis of c-type cytochromes (cytochrome c6 and cytochrome f) at the step of heme attachment. The protein is Cytochrome c biogenesis protein Ccs1 of Heterosigma akashiwo (strain CCMP452 / OLISTH).